We begin with the raw amino-acid sequence, 1841 residues long: Sucrase-isomaltase, intestinal (1841 aa).

The Cytoplasmic segment spans residues 1 to 12 (MAKKKFSALEIS). Position 7 is a phosphoserine; by PKA (Ser7). The helical; Signal-anchor for type II membrane protein transmembrane segment at 13–32 (LIVLFIIVTAIAIALVTVLA) threads the bilayer. At 33–1841 (TKVPAVEEIK…LDEPIQITWS (1809 aa)) the chain is on the lumenal side. The interval 42–81 (KSPTPTSNSTPTSTPTSTSTPTSTSTPSPGKCPPEQGEPI) is disordered. The segment covering 43–70 (SPTPTSNSTPTSTPTSTSTPTSTSTPSP) has biased composition (low complexity). One can recognise a P-type 1 domain in the interval 71-120 (GKCPPEQGEPINERINCIPEQHPTKAICEERGCCWRPWNNTVIPWCFFAD). 3 cysteine pairs are disulfide-bonded: Cys73-Cys104, Cys87-Cys103, and Cys98-Cys116. Asn109 carries an N-linked (GlcNAc...) asparagine glycan. The isomaltase stretch occupies residues 120-1013 (DNHGYNAESI…ELQLNPPNAR (894 aa)). Positions 274 and 398 each coordinate substrate. Sulfotyrosine occurs at positions 401 and 410. Residue Asn464 is glycosylated (N-linked (GlcNAc...) asparagine). Catalysis depends on Asp514, which acts as the Nucleophile; for isomaltase activity. Arg599 provides a ligand contact to substrate. Asp615 acts as the For isomaltase activity in catalysis. Cys646 and Cys657 are disulfide-bonded. Substrate is bound at residue His673. Residues Asn758, Asn765, Asn867, and Asn910 are each glycosylated (N-linked (GlcNAc...) asparagine). One can recognise a P-type 2 domain in the interval 936-984 (RWCRTFSDNEKFTCYPDVGTATEGTCTQRGCLWQPVSGLSNVPPYYFPP). The sucrase stretch occupies residues 1014–1841 (IKLPSNPIST…LDEPIQITWS (828 aa)). 5 N-linked (GlcNAc...) asparagine glycosylation sites follow: Asn1240, Asn1308, Asn1345, Asn1359, and Asn1373. The residue at position 1387 (Tyr1387) is a Sulfotyrosine. Asp1399 acts as the Nucleophile; for sucrase activity in catalysis. Glu1402 acts as the For sucrase activity in catalysis. N-linked (GlcNAc...) asparagine glycosylation occurs at Asn1485. Asp1512 serves as the catalytic Proton donor; for sucrase activity. N-linked (GlcNAc...) asparagine glycans are attached at residues Asn1513, Asn1575, Asn1762, and Asn1829.

Belongs to the glycosyl hydrolase 31 family. In terms of assembly, the resulting sucrase and isomaltase subunits stay associated with one another in a complex by non-covalent linkages. The precursor is proteolytically cleaved when exposed to pancreatic proteases in the intestinal lumen. Post-translationally, sulfated.

It localises to the apical cell membrane. The enzyme catalyses Hydrolysis of sucrose and maltose by an alpha-D-glucosidase-type action.. It catalyses the reaction Hydrolysis of (1-&gt;6)-alpha-D-glucosidic linkages in some oligosaccharides produced from starch and glycogen by alpha-amylase, and in isomaltose.. Its function is as follows. Plays an important role in the final stage of carbohydrate digestion. Isomaltase activity is specific for both alpha-1,4- and alpha-1,6-oligosaccharides. This Rattus norvegicus (Rat) protein is Sucrase-isomaltase, intestinal (Si).